A 44-amino-acid chain; its full sequence is Thrombin-like enzyme F202 (44 aa).

Positions 1–44 (VVGGDECNINEHRFLVALYANSSLLCGGTLINQEWVLIAAHCDR) constitute a Peptidase S1 domain. C26 and C42 are oxidised to a cystine. H41 serves as the catalytic Charge relay system.

This sequence belongs to the peptidase S1 family. Snake venom subfamily. Monomer. In terms of processing, contains 6 disulfide bonds. As to expression, expressed by the venom gland.

It is found in the secreted. With respect to regulation, enzyme activity is markedly inhibited by TLCK and PMSF, and moderately by SBTi. Platelet aggregating activity is strongly inhibited by TLCK. Its function is as follows. Thrombin-like snake venom serine protease that coagulates fibrinogen by inducing a fast degradation of the alpha chain (FGA) from human citrated plasma, and a slow degradation of beta chain (FGB). Potently induces platelet aggregation in both platelet rich plasma and washed platelet preparations in a concentration-dependent fashion. Shows amidolytic activities. The sequence is that of Thrombin-like enzyme F202 from Crotalus durissus cascavella (Northeastern Brazilian rattlesnake).